The sequence spans 504 residues: Cytochrome P450 2D1 (504 aa).

Cysteine 446 is a binding site for heme.

It belongs to the cytochrome P450 family. Heme serves as cofactor.

The protein resides in the endoplasmic reticulum membrane. Its subcellular location is the microsome membrane. It carries out the reaction an organic molecule + reduced [NADPH--hemoprotein reductase] + O2 = an alcohol + oxidized [NADPH--hemoprotein reductase] + H2O + H(+). In terms of biological role, cytochromes P450 are a group of heme-thiolate monooxygenases. In liver microsomes, this enzyme is involved in an NADPH-dependent electron transport pathway. It oxidizes a variety of structurally unrelated compounds, including steroids, fatty acids, and xenobiotics. The sequence is that of Cytochrome P450 2D1 (Cyp2d1) from Rattus norvegicus (Rat).